Consider the following 898-residue polypeptide: Interleukin enhancer-binding factor 3 (898 aa).

The 374-residue stretch at 5–378 folds into the DZF domain; it reads RIFVNDDRHV…PMKRPMEEDG (374 aa). A disordered region spans residues 52–85; that stretch reads QEKGNSELSEAENMDTPPDDESKEGAGEQKAEHM. Residues 60 to 73 are compositionally biased toward acidic residues; sequence SEAENMDTPPDDES. Thr-67 carries the post-translational modification Phosphothreonine. The segment covering 74 to 85 has biased composition (basic and acidic residues); sequence KEGAGEQKAEHM. At Lys-100 the chain carries N6-acetyllysine. Thr-188 is modified (phosphothreonine; by PKR). A Phosphoserine modification is found at Ser-190. Lys-297 is covalently cross-linked (Glycyl lysine isopeptide (Lys-Gly) (interchain with G-Cter in ubiquitin)). Thr-315 carries the post-translational modification Phosphothreonine; by PKR. A Glycyl lysine isopeptide (Lys-Gly) (interchain with G-Cter in SUMO1) cross-link involves residue Lys-348. The segment at 363–402 is disordered; sequence TTYAITPMKRPMEEDGEEKSPSKKKKKIQKKEEKADPPQA. A Bipartite nuclear localization signal motif is present at residues 371–389; it reads KRPMEEDGEEKSPSKKKKK. A compositionally biased stretch (basic and acidic residues) spans 372 to 383; sequence RPMEEDGEEKSP. Phosphoserine occurs at positions 382 and 384. Residue Lys-396 forms a Glycyl lysine isopeptide (Lys-Gly) (interchain with G-Cter in SUMO2) linkage. The DRBM 1 domain maps to 398–467; that stretch reads DPPQAMNALM…AVKVLQDMGL (70 aa). Lys-460 is subject to N6-acetyllysine. Disordered regions lie at residues 466-495 and 505-524; these read GLPT…IVAP and PSSV…LTKH. Over residues 472–481 the composition is skewed to basic and acidic residues; that stretch reads EGRDSSKGED. Phosphoserine is present on residues Ser-476, Ser-477, Ser-482, and Ser-486. Lys-489 is covalently cross-linked (Glycyl lysine isopeptide (Lys-Gly) (interchain with G-Cter in SUMO2)). One can recognise a DRBM 2 domain in the interval 524–590; sequence HGKNPVMELN…ALAALEKLFP (67 aa). Position 592 is a phosphothreonine (Thr-592). Positions 609–898 are interaction with PRMT1; that stretch reads RGGPKFAAKP…TEHSMNYQYR (290 aa). 2 disordered regions span residues 631–661 and 719–898; these read NEVP…GGAN and QGDS…YQYR. Residues 644 to 661 show a composition bias toward gly residues; that stretch reads RGGNIRGRGRGRGFGGAN. Low complexity-rich tracts occupy residues 745-769, 783-794, and 802-812; these read SYSS…SSYG, GSYSSYSNSYNS, and DYSYDSKFNYS. Phosphoserine occurs at positions 794, 812, 814, and 818. Residues 813 to 822 show a composition bias toward gly residues; the sequence is GSGGRSGGNS. Low complexity predominate over residues 823-834; that stretch reads YGSSGSSSYNTG. Residues 835–845 show a composition bias toward gly residues; sequence SHGGYGTGSGG. A compositionally biased stretch (low complexity) spans 846–886; sequence SSSYQGKQGGYSSQSNYSSPGSSQSYSGPASSYQSSQGGYS.

As to quaternary structure, identified in a IGF2BP1-dependent mRNP granule complex containing untranslated mRNAs. Interacts with FUS and SMN. Interacts (via C-terminus) with PRMT1. Forms a complex with ILF2. Can also bind to PRKDC/XRCC7: this may stabilize the interaction of PRKDC/XRCC7 and the heterodimeric complex of XRCC6/KU70 and XRCC5/KU80. Forms a heteromeric complex with ZNF346 and ILF3. Found in a nuclear export complex with XPO5, ILF3, Ran and double-stranded RNA or double-stranded minihelix VA1 RNA. Found in a nuclear export complex with XPO5, RAN, ILF3, ZNF346 and double-stranded RNA. Interacts with XPO5 and ZNF346. Forms a complex with ILF2, YLPM1, KHDRBS1, RBMX, NCOA5 and PPP1CA. Interacts with AGO1 and AGO2. Interacts with DHX36; this interaction occurs in a RNA-dependent manner. Interacts with ELAVL1; this interaction occurs in a RNA-dependent manner. Interacts with HAVCR2; this interaction promotes ILF3 ubiquitination and subsequent degradation. Post-translationally, phosphorylated at Thr-188 and Thr-315 by PKR in response to RNA viruses. This phosphorylation results in the dissociation of ILF2 from the ILF2-ILF3 complex resulting in a cytoplasmic sequestration of ILF3 where it can bind to viral RNAs and impede viral replication. In terms of processing, methylated by protein arginine N-methyltransferase 1. As to expression, ubiquitous. Expressed at high levels in the thymus, testis, ovary and at lower levelss in the spleen.

Its subcellular location is the nucleus. It localises to the nucleolus. The protein localises to the cytoplasm. RNA-binding protein that plays an essential role in the biogenesis of circular RNAs (circRNAs) which are produced by back-splicing circularization of pre-mRNAs. Within the nucleus, promotes circRNAs processing by stabilizing the regulatory elements residing in the flanking introns of the circularized exons. Plays thereby a role in the back-splicing of a subset of circRNAs. As a consequence, participates in a wide range of transcriptional and post-transcriptional processes. Binds to poly-U elements and AU-rich elements (AREs) in the 3'-UTR of target mRNAs. Upon viral infection, ILF3 accumulates in the cytoplasm and participates in the innate antiviral response. Mechanistically, ILF3 becomes phosphorylated and activated by the double-stranded RNA-activated protein kinase/PKR which releases ILF3 from cellular mature circRNAs. In turn, unbound ILF3 molecules are able to interact with and thus inhibit viral mRNAs. The chain is Interleukin enhancer-binding factor 3 (Ilf3) from Mus musculus (Mouse).